A 943-amino-acid chain; its full sequence is Isoleucine--tRNA ligase (943 aa).

The 'HIGH' region motif lies at 58-68 (PYANGSIHIGH). Glu-567 is a binding site for L-isoleucyl-5'-AMP. The 'KMSKS' region motif lies at 608 to 612 (KMSKS). Lys-611 contributes to the ATP binding site. Cys-906, Cys-909, Cys-926, and Cys-929 together coordinate Zn(2+).

This sequence belongs to the class-I aminoacyl-tRNA synthetase family. IleS type 1 subfamily. Monomer. Zn(2+) is required as a cofactor.

It is found in the cytoplasm. The enzyme catalyses tRNA(Ile) + L-isoleucine + ATP = L-isoleucyl-tRNA(Ile) + AMP + diphosphate. In terms of biological role, catalyzes the attachment of isoleucine to tRNA(Ile). As IleRS can inadvertently accommodate and process structurally similar amino acids such as valine, to avoid such errors it has two additional distinct tRNA(Ile)-dependent editing activities. One activity is designated as 'pretransfer' editing and involves the hydrolysis of activated Val-AMP. The other activity is designated 'posttransfer' editing and involves deacylation of mischarged Val-tRNA(Ile). The chain is Isoleucine--tRNA ligase from Pseudomonas aeruginosa (strain UCBPP-PA14).